Here is a 192-residue protein sequence, read N- to C-terminus: Transcription termination/antitermination protein NusG (192 aa).

A KOW domain is found at 140–168; it reads VGEIVIVTDGPFETFTGTVEEIDQEKNRL.

It belongs to the NusG family.

Participates in transcription elongation, termination and antitermination. This chain is Transcription termination/antitermination protein NusG, found in Rickettsia felis (strain ATCC VR-1525 / URRWXCal2) (Rickettsia azadi).